Reading from the N-terminus, the 239-residue chain is 4-hydroxy-tetrahydrodipicolinate reductase (239 aa).

Residues 9-14 (GINGKM), 78-80 (GTT), and 104-107 (APNF) contribute to the NAD(+) site. The Proton donor/acceptor role is filled by His134. Residue His135 participates in (S)-2,3,4,5-tetrahydrodipicolinate binding. Catalysis depends on Lys138, which acts as the Proton donor. 144 to 145 (GT) provides a ligand contact to (S)-2,3,4,5-tetrahydrodipicolinate.

Belongs to the DapB family.

Its subcellular location is the cytoplasm. The enzyme catalyses (S)-2,3,4,5-tetrahydrodipicolinate + NAD(+) + H2O = (2S,4S)-4-hydroxy-2,3,4,5-tetrahydrodipicolinate + NADH + H(+). It carries out the reaction (S)-2,3,4,5-tetrahydrodipicolinate + NADP(+) + H2O = (2S,4S)-4-hydroxy-2,3,4,5-tetrahydrodipicolinate + NADPH + H(+). Its pathway is amino-acid biosynthesis; L-lysine biosynthesis via DAP pathway; (S)-tetrahydrodipicolinate from L-aspartate: step 4/4. Functionally, catalyzes the conversion of 4-hydroxy-tetrahydrodipicolinate (HTPA) to tetrahydrodipicolinate. The protein is 4-hydroxy-tetrahydrodipicolinate reductase of Coxiella burnetii (strain Dugway 5J108-111).